The primary structure comprises 367 residues: UDP-N-acetylglucosamine--N-acetylmuramyl-(pentapeptide) pyrophosphoryl-undecaprenol N-acetylglucosamine transferase (367 aa).

UDP-N-acetyl-alpha-D-glucosamine is bound by residues T10–G12, N124, S196, and Q300.

It belongs to the glycosyltransferase 28 family. MurG subfamily.

The protein localises to the cell membrane. The enzyme catalyses di-trans,octa-cis-undecaprenyl diphospho-N-acetyl-alpha-D-muramoyl-L-alanyl-D-glutamyl-meso-2,6-diaminopimeloyl-D-alanyl-D-alanine + UDP-N-acetyl-alpha-D-glucosamine = di-trans,octa-cis-undecaprenyl diphospho-[N-acetyl-alpha-D-glucosaminyl-(1-&gt;4)]-N-acetyl-alpha-D-muramoyl-L-alanyl-D-glutamyl-meso-2,6-diaminopimeloyl-D-alanyl-D-alanine + UDP + H(+). It participates in cell wall biogenesis; peptidoglycan biosynthesis. Its function is as follows. Cell wall formation. Catalyzes the transfer of a GlcNAc subunit on undecaprenyl-pyrophosphoryl-MurNAc-pentapeptide (lipid intermediate I) to form undecaprenyl-pyrophosphoryl-MurNAc-(pentapeptide)GlcNAc (lipid intermediate II). The sequence is that of UDP-N-acetylglucosamine--N-acetylmuramyl-(pentapeptide) pyrophosphoryl-undecaprenol N-acetylglucosamine transferase from Natranaerobius thermophilus (strain ATCC BAA-1301 / DSM 18059 / JW/NM-WN-LF).